Consider the following 314-residue polypeptide: Dihydropteroate synthase (314 aa).

A Pterin-binding domain is found at 10–294 (TVICGIINVT…DVASHRMAVE (285 aa)). N17 contacts Mg(2+). (7,8-dihydropterin-6-yl)methyl diphosphate is bound by residues T57, D91, N110, D201, K237, and 282–284 (RVH).

This sequence belongs to the DHPS family. Homodimer or homotrimer. The cofactor is Mg(2+).

The enzyme catalyses (7,8-dihydropterin-6-yl)methyl diphosphate + 4-aminobenzoate = 7,8-dihydropteroate + diphosphate. It functions in the pathway cofactor biosynthesis; tetrahydrofolate biosynthesis; 7,8-dihydrofolate from 2-amino-4-hydroxy-6-hydroxymethyl-7,8-dihydropteridine diphosphate and 4-aminobenzoate: step 1/2. Functionally, catalyzes the condensation of para-aminobenzoate (pABA) with 6-hydroxymethyl-7,8-dihydropterin diphosphate (DHPt-PP) to form 7,8-dihydropteroate (H2Pte), the immediate precursor of folate derivatives. This is Dihydropteroate synthase (sulA) from Streptococcus pneumoniae serotype 4 (strain ATCC BAA-334 / TIGR4).